Reading from the N-terminus, the 431-residue chain is IMP-specific 5'-nucleotidase 1 (431 aa).

An ATP-binding site is contributed by lysine 117. Aspartate 157 serves as the catalytic Nucleophile. The IMP site is built by aspartate 157, aspartate 159, aspartate 165, threonine 193, aspartate 349, and lysine 357. Mg(2+) contacts are provided by aspartate 157 and aspartate 159. Residue aspartate 159 is the Proton donor of the active site. A Mg(2+)-binding site is contributed by aspartate 388.

Belongs to the ISN1 family. In terms of assembly, homotetramer. It depends on Mg(2+) as a cofactor.

It catalyses the reaction IMP + H2O = inosine + phosphate. Its activity is regulated as follows. Allosterically activated by ATP. ATP binding is a prerequisite to magnesium and substrate binding. ATP binds to 2 of the subunits in the homotetramer inducing a closure of these 2 subunits and the release of the C-terminal loop, thereby activating the enzyme. Functionally, IMP-specific 5'-nucleotidase involved in IMP (inositol monophosphate) degradation. The chain is IMP-specific 5'-nucleotidase 1 (isn-1) from Neurospora crassa (strain ATCC 24698 / 74-OR23-1A / CBS 708.71 / DSM 1257 / FGSC 987).